The chain runs to 715 residues: 1,4-alpha-glucan branching enzyme GlgB (715 aa).

D396 functions as the Nucleophile in the catalytic mechanism. Catalysis depends on E449, which acts as the Proton donor.

This sequence belongs to the glycosyl hydrolase 13 family. GlgB subfamily. Monomer.

It carries out the reaction Transfers a segment of a (1-&gt;4)-alpha-D-glucan chain to a primary hydroxy group in a similar glucan chain.. It functions in the pathway glycan biosynthesis; glycogen biosynthesis. Catalyzes the formation of the alpha-1,6-glucosidic linkages in glycogen by scission of a 1,4-alpha-linked oligosaccharide from growing alpha-1,4-glucan chains and the subsequent attachment of the oligosaccharide to the alpha-1,6 position. In Vibrio vulnificus (strain CMCP6), this protein is 1,4-alpha-glucan branching enzyme GlgB.